A 329-amino-acid polypeptide reads, in one-letter code: Diaminopimelate epimerase (329 aa).

Positions 14 and 73 each coordinate substrate. The Proton donor role is filled by Cys82. Substrate-binding positions include 83 to 84, Asn170, Asn206, and 224 to 225; these read GN and ER. Residue Cys233 is the Proton acceptor of the active site. Residue 234 to 235 coordinates substrate; the sequence is GT.

Belongs to the diaminopimelate epimerase family. As to quaternary structure, homodimer.

The protein resides in the cytoplasm. The catalysed reaction is (2S,6S)-2,6-diaminopimelate = meso-2,6-diaminopimelate. Its pathway is amino-acid biosynthesis; L-lysine biosynthesis via DAP pathway; DL-2,6-diaminopimelate from LL-2,6-diaminopimelate: step 1/1. Its function is as follows. Catalyzes the stereoinversion of LL-2,6-diaminopimelate (L,L-DAP) to meso-diaminopimelate (meso-DAP), a precursor of L-lysine and an essential component of the bacterial peptidoglycan. In Listeria monocytogenes serotype 4b (strain CLIP80459), this protein is Diaminopimelate epimerase.